A 518-amino-acid polypeptide reads, in one-letter code: Calcium/calmodulin-dependent protein kinase kinase cmkC (518 aa).

Residues 1–72 (MANEGAGSLQ…SEYTLSQDDG (72 aa)) are disordered. Polar residues-rich tracts occupy residues 8–17 (SLQQDASPGS) and 60–71 (NARSEYTLSQDD). Positions 81–376 (YVIKQEIGRG…MDELREHPWV (296 aa)) constitute a Protein kinase domain. Residues 87–95 (IGRGSFGAV) and Lys109 each bind ATP. Residues 119–149 (RAKSQLLRQSRGPKRSSRWPKLPFSSPGTGT) are disordered. The active-site Proton acceptor is the Asp243. The autoinhibitory domain stretch occupies residues 404–409 (FSAITK). Positions 407 to 431 (ITKNFGHVLAVMKAAKKFKSLQGPT) are calmodulin-binding. Positions 453–472 (PTQMDPEESVSLPSPLPYKK) are disordered.

It belongs to the protein kinase superfamily. Ser/Thr protein kinase family.

The enzyme catalyses L-seryl-[protein] + ATP = O-phospho-L-seryl-[protein] + ADP + H(+). The catalysed reaction is L-threonyl-[protein] + ATP = O-phospho-L-threonyl-[protein] + ADP + H(+). Its activity is regulated as follows. Activated by Ca(2+)/calmodulin. Binding of calmodulin may relieve intrasteric autoinhibition. Its function is as follows. Calcium/calmodulin-dependent protein kinase that operates in the calcium-triggered CaMKK-CaMK1 signaling cascade. Phosphorylates and activates cmkB in vitro. Required in G1-phase of the cell cycle for proper timing of the initial nuclear division after germination as well as for subsequent nuclear division cycles. Required for the normal temporal regulation of nimX activity. The sequence is that of Calcium/calmodulin-dependent protein kinase kinase cmkC from Emericella nidulans (Aspergillus nidulans).